Here is a 195-residue protein sequence, read N- to C-terminus: E3 ubiquitin-protein ligase ZNRF1 (195 aa).

Residues 1–10 (MGGKQSSASR) are compositionally biased toward polar residues. 2 disordered regions span residues 1–36 (MGGK…HFRA) and 61–84 (PFGL…DSRG). Gly-2 carries the N-myristoyl glycine lipid modification. Over residues 18–29 (VSSDDSAVPPSS) the composition is skewed to low complexity. An RING-type; atypical zinc finger spans residues 152 to 193 (CVICLEELSQGDTIARLPCLCIYHKSCIDSWFEVNRCCPEHP).

It localises to the endosome. The protein localises to the lysosome. It is found in the membrane. It catalyses the reaction S-ubiquitinyl-[E2 ubiquitin-conjugating enzyme]-L-cysteine + [acceptor protein]-L-lysine = [E2 ubiquitin-conjugating enzyme]-L-cysteine + N(6)-ubiquitinyl-[acceptor protein]-L-lysine.. Its pathway is protein modification; protein ubiquitination. In terms of biological role, E3 ubiquitin-protein ligase that plays a role in neuron cells differentiation. Plays a role in the establishment and maintenance of neuronal transmission and plasticity. In Xenopus tropicalis (Western clawed frog), this protein is E3 ubiquitin-protein ligase ZNRF1 (znrf1).